Here is a 345-residue protein sequence, read N- to C-terminus: MIKVGIIGSTGYIGQQLVWLLKIHPNVEIVFLSSYNYAGYSFNSVYNNYKGFVETTCINIKEVKTRLKDVDIVFMALPHGKSFEMVKYSLNLGIKVIDLSGDFRLKDSKEYEKWYKIEHPLKEVLKYSVYGLPELFRKDIKKASLICNPGCYATASILALAPLIKLDLVEKGSIIVDAKSGVSGAGRALKTQSLYCECNETMKAYGIGNHRHTPEIEQELSRFCKEDIKLTFTPHLVPINRGIFATCYATLKKDLNKVQLEEAYEKFYENDYFIKVMKELVEVKWIKNSNFCNMNVNIDERTNKVIVSSVIDNLMKGAASQAVQNMNILFGIDEKTGLNIPSMMI.

Cys151 is a catalytic residue.

The protein belongs to the NAGSA dehydrogenase family. Type 1 subfamily.

It is found in the cytoplasm. It catalyses the reaction N-acetyl-L-glutamate 5-semialdehyde + phosphate + NADP(+) = N-acetyl-L-glutamyl 5-phosphate + NADPH + H(+). It functions in the pathway amino-acid biosynthesis; L-arginine biosynthesis; N(2)-acetyl-L-ornithine from L-glutamate: step 3/4. Catalyzes the NADPH-dependent reduction of N-acetyl-5-glutamyl phosphate to yield N-acetyl-L-glutamate 5-semialdehyde. The protein is N-acetyl-gamma-glutamyl-phosphate reductase of Clostridium novyi (strain NT).